An 85-amino-acid polypeptide reads, in one-letter code: Three-finger toxin MALT0044C (85 aa).

A signal peptide spans 1–21; it reads MKTLLLTLVVVTIVCLDLGNT. 4 cysteine pairs are disulfide-bonded: C24/C45, C38/C63, C67/C78, and C79/C84.

This sequence belongs to the three-finger toxin family. Short-chain subfamily. In terms of tissue distribution, expressed by the venom gland.

Its subcellular location is the secreted. The polypeptide is Three-finger toxin MALT0044C (Micrurus altirostris (Uruguayan coral snake)).